A 331-amino-acid polypeptide reads, in one-letter code: Ferredoxin--NADP reductase 2 (331 aa).

Residues glutamate 37, glutamine 45, tyrosine 50, valine 90, phenylalanine 124, aspartate 286, and threonine 327 each coordinate FAD.

The protein belongs to the ferredoxin--NADP reductase type 2 family. Homodimer. Requires FAD as cofactor.

It carries out the reaction 2 reduced [2Fe-2S]-[ferredoxin] + NADP(+) + H(+) = 2 oxidized [2Fe-2S]-[ferredoxin] + NADPH. The sequence is that of Ferredoxin--NADP reductase 2 from Listeria innocua serovar 6a (strain ATCC BAA-680 / CLIP 11262).